An 819-amino-acid chain; its full sequence is Protein EFR3 homolog A (819 aa).

The tract at residues 210–230 (DTDSRTGPPASPTTGDKEENP) is disordered.

Belongs to the EFR3 family. In terms of assembly, component of a phosphatidylinositol 4-kinase (PI4K) complex. Post-translationally, palmitoylated at its N-terminus, anchoring the protein to the plasma membrane.

The protein localises to the cell membrane. Component of a complex required to localize phosphatidylinositol 4-kinase (PI4K) to the plasma membrane. The complex acts as a regulator of phosphatidylinositol 4-phosphate (PtdIns(4)P) synthesis. In the complex, efr3a probably acts as the membrane-anchoring component. This Xenopus laevis (African clawed frog) protein is Protein EFR3 homolog A (efr3a).